We begin with the raw amino-acid sequence, 467 residues long: Probable citrate synthase 1, mitochondrial (467 aa).

Residues His-303, His-349, and Asp-404 contribute to the active site.

The protein belongs to the citrate synthase family. In terms of assembly, homodimer.

The protein localises to the mitochondrion matrix. It catalyses the reaction oxaloacetate + acetyl-CoA + H2O = citrate + CoA + H(+). Its pathway is carbohydrate metabolism; tricarboxylic acid cycle; isocitrate from oxaloacetate: step 1/2. In Aedes aegypti (Yellowfever mosquito), this protein is Probable citrate synthase 1, mitochondrial.